The following is a 402-amino-acid chain: Argininosuccinate synthase (402 aa).

9-17 (AYSGGLDTS) lines the ATP pocket. Tyrosine 86 is an L-citrulline binding site. Glycine 116 lines the ATP pocket. Residues threonine 118, asparagine 122, and aspartate 123 each coordinate L-aspartate. L-citrulline is bound at residue asparagine 122. 5 residues coordinate L-citrulline: arginine 126, serine 174, serine 183, glutamate 259, and tyrosine 271.

It belongs to the argininosuccinate synthase family. Type 1 subfamily. Homotetramer.

It localises to the cytoplasm. The catalysed reaction is L-citrulline + L-aspartate + ATP = 2-(N(omega)-L-arginino)succinate + AMP + diphosphate + H(+). The protein operates within amino-acid biosynthesis; L-arginine biosynthesis; L-arginine from L-ornithine and carbamoyl phosphate: step 2/3. The chain is Argininosuccinate synthase from Anoxybacillus flavithermus (strain DSM 21510 / WK1).